We begin with the raw amino-acid sequence, 112 residues long: UPF0102 protein TTHA0372 (112 aa).

Belongs to the UPF0102 family.

This is UPF0102 protein TTHA0372 from Thermus thermophilus (strain ATCC 27634 / DSM 579 / HB8).